The following is a 432-amino-acid chain: D-amino acid dehydrogenase (432 aa).

3–17 (VVILGSGVVGVASAW) lines the FAD pocket.

The protein belongs to the DadA oxidoreductase family. FAD is required as a cofactor.

It catalyses the reaction a D-alpha-amino acid + A + H2O = a 2-oxocarboxylate + AH2 + NH4(+). It functions in the pathway amino-acid degradation; D-alanine degradation; NH(3) and pyruvate from D-alanine: step 1/1. Its function is as follows. Oxidative deamination of D-amino acids. The chain is D-amino acid dehydrogenase from Shigella boydii serotype 4 (strain Sb227).